The following is a 139-amino-acid chain: Small ribosomal subunit protein uS11A (139 aa).

The interval Asp119–Leu139 is disordered. A compositionally biased stretch (basic residues) spans Arg130–Leu139.

It belongs to the universal ribosomal protein uS11 family. Component of the small ribosomal subunit (SSU). Mature yeast ribosomes consist of a small (40S) and a large (60S) subunit. The 40S small subunit contains 1 molecule of ribosomal RNA (18S rRNA) and at least 33 different proteins. The large 60S subunit contains 3 rRNA molecules (25S, 5.8S and 5S rRNA) and at least 46 different proteins. uS11 interacts with eS1 forming part of the mRNA exit tunnel. uS11 interacts with snoRNA U3. uS11 interacts with MPP10. Component of the ribosomal small subunit (SSU) processome composed of at least 40 protein subunits and snoRNA U3.

It localises to the cytoplasm. Its subcellular location is the nucleus. It is found in the nucleolus. Functionally, component of the ribosome, a large ribonucleoprotein complex responsible for the synthesis of proteins in the cell. The small ribosomal subunit (SSU) binds messenger RNAs (mRNAs) and translates the encoded message by selecting cognate aminoacyl-transfer RNA (tRNA) molecules. The large subunit (LSU) contains the ribosomal catalytic site termed the peptidyl transferase center (PTC), which catalyzes the formation of peptide bonds, thereby polymerizing the amino acids delivered by tRNAs into a polypeptide chain. The nascent polypeptides leave the ribosome through a tunnel in the LSU and interact with protein factors that function in enzymatic processing, targeting, and the membrane insertion of nascent chains at the exit of the ribosomal tunnel. uS11 is involved in nucleolar processing of pre-18S ribosomal RNA and ribosome assembly. This Schizosaccharomyces pombe (strain 972 / ATCC 24843) (Fission yeast) protein is Small ribosomal subunit protein uS11A (rps1401).